Here is a 131-residue protein sequence, read N- to C-terminus: Cystatin-like cysteine protease inhibitor EPIC3 (131 aa).

Positions 1-20 (MAFTRSIALFAGLALAASSA) are cleaved as a signal peptide. Residue asparagine 33 is glycosylated (N-linked (GlcNAc...) asparagine). The short motif at 71-75 (QTVAG) is the Secondary area of contact element.

It belongs to the cystatin family.

The protein localises to the secreted. Functionally, secreted effector that interacts with and inhibits host apoplastic pathogenesis-related papain-like cysteine proteases. Inhibition of host proteases by a pathogen extracellular protease inhibitor forms a specific type of defense-counterdefense mechanism between plants and microbial pathogens. This Phytophthora infestans (Potato late blight agent) protein is Cystatin-like cysteine protease inhibitor EPIC3.